The chain runs to 283 residues: 4-diphosphocytidyl-2-C-methyl-D-erythritol kinase (283 aa).

The active site involves Lys10. 99-109 contributes to the ATP binding site; sequence PMGGGLGGGSS. Asp141 is a catalytic residue.

Belongs to the GHMP kinase family. IspE subfamily. As to quaternary structure, homodimer.

It catalyses the reaction 4-CDP-2-C-methyl-D-erythritol + ATP = 4-CDP-2-C-methyl-D-erythritol 2-phosphate + ADP + H(+). It participates in isoprenoid biosynthesis; isopentenyl diphosphate biosynthesis via DXP pathway; isopentenyl diphosphate from 1-deoxy-D-xylulose 5-phosphate: step 3/6. Functionally, catalyzes the phosphorylation of the position 2 hydroxy group of 4-diphosphocytidyl-2C-methyl-D-erythritol. This chain is 4-diphosphocytidyl-2-C-methyl-D-erythritol kinase, found in Escherichia coli (strain 55989 / EAEC).